We begin with the raw amino-acid sequence, 393 residues long: Tryptophan synthase beta chain (393 aa).

The residue at position 85 (Lys85) is an N6-(pyridoxal phosphate)lysine.

It belongs to the TrpB family. Tetramer of two alpha and two beta chains. The cofactor is pyridoxal 5'-phosphate.

The enzyme catalyses (1S,2R)-1-C-(indol-3-yl)glycerol 3-phosphate + L-serine = D-glyceraldehyde 3-phosphate + L-tryptophan + H2O. The protein operates within amino-acid biosynthesis; L-tryptophan biosynthesis; L-tryptophan from chorismate: step 5/5. Functionally, the beta subunit is responsible for the synthesis of L-tryptophan from indole and L-serine. This Helicobacter pylori (strain J99 / ATCC 700824) (Campylobacter pylori J99) protein is Tryptophan synthase beta chain (trpB).